A 177-amino-acid chain; its full sequence is Protein VERNALIZATION 3 (177 aa).

The protein belongs to the phosphatidylethanolamine-binding protein family. In terms of tissue distribution, expressed in leaves but not in shoot apex.

Functionally, involved in the regulation of vernalization and of flowering time; this process in essential for flowering in cv. Bd29-1 but seems do not occur in cv. Bd21. This Brachypodium distachyon (Purple false brome) protein is Protein VERNALIZATION 3.